The sequence spans 118 residues: HTH-type transcriptional regulator SarT (118 aa).

A DNA-binding region (H-T-H motif) is located at residues 55–78 (MRDIISYIGIDQSRIVKSVKDLSK).

This sequence belongs to the SarA family.

The protein localises to the cytoplasm. Functionally, transcriptional regulator acting as an intermediary between major regulators sarA and agr and virulence genes. Represses alpha-hemolysin (hla) gene expression. Down-regulates agr RNAIII expression by repressing sarU, a positive activator of agr expression. Up-regulates sarS, which induces the expression of the cell wall-associated protein A (spa). The sequence is that of HTH-type transcriptional regulator SarT (sarT) from Staphylococcus aureus (strain NCTC 8325 / PS 47).